Consider the following 250-residue polypeptide: 5-oxoprolinase subunit A (250 aa).

This sequence belongs to the LamB/PxpA family. As to quaternary structure, forms a complex composed of PxpA, PxpB and PxpC.

The enzyme catalyses 5-oxo-L-proline + ATP + 2 H2O = L-glutamate + ADP + phosphate + H(+). In terms of biological role, catalyzes the cleavage of 5-oxoproline to form L-glutamate coupled to the hydrolysis of ATP to ADP and inorganic phosphate. This Staphylococcus aureus (strain MRSA252) protein is 5-oxoprolinase subunit A.